The chain runs to 348 residues: Protein RecA (348 aa).

Residue 67 to 74 participates in ATP binding; the sequence is GPESSGKT.

This sequence belongs to the RecA family.

Its subcellular location is the cytoplasm. Functionally, can catalyze the hydrolysis of ATP in the presence of single-stranded DNA, the ATP-dependent uptake of single-stranded DNA by duplex DNA, and the ATP-dependent hybridization of homologous single-stranded DNAs. It interacts with LexA causing its activation and leading to its autocatalytic cleavage. The chain is Protein RecA from Amycolatopsis mediterranei (strain U-32).